The sequence spans 534 residues: Beta-1,2-xylosyltransferase (534 aa).

Residues 1-11 (MSKRNPKILKI) lie on the Cytoplasmic side of the membrane. The chain crosses the membrane as a helical; Signal-anchor for type II membrane protein span at residues 12 to 34 (FLYMLLLNSLFLIIYFVFHSSSF). Residues 35–534 (SPEQSQPPHI…LTEIMKSLGC (500 aa)) are Lumenal-facing. Asparagine 51, asparagine 301, and asparagine 479 each carry an N-linked (GlcNAc...) asparagine glycan.

In terms of processing, glycosylation at least at one of the two sites Asn-51 and Asn-301 is necessary for enzyme stability and activity.

It is found in the golgi apparatus membrane. The enzyme catalyses N(4)-{beta-D-GlcNAc-(1-&gt;2)-alpha-D-Man-(1-&gt;3)-[beta-D-GlcNAc-(1-&gt;2)-alpha-D-Man-(1-&gt;6)]-beta-D-Man-(1-&gt;4)-beta-D-GlcNAc-(1-&gt;4)-beta-D-GlcNAc}-L-asparaginyl-[protein] + UDP-alpha-D-xylose = N(4)-{beta-D-GlcNAc-(1-&gt;2)-alpha-D-Man-(1-&gt;3)-[beta-D-GlcNAc-(1-&gt;2)-alpha-D-Man-(1-&gt;6)]-[beta-D-Xyl-(1-&gt;2)]-beta-D-Man-(1-&gt;4)-beta-D-GlcNAc-(1-&gt;4)-beta-D-GlcNAc}-L-asparaginyl-[protein] + UDP + H(+). It participates in protein modification; protein glycosylation. Functionally, glycosyltransferase involved in the xylosylation of N-glycans. Possesses beta-1,2-xylosyltransferase activity, transferring xylose from UDP-xylose to the core beta-linked mannose of N-glycans. Involved in the biosynthesis of glycoprotein bound N-glycans. Does not require metal ions for its activity. The chain is Beta-1,2-xylosyltransferase from Arabidopsis thaliana (Mouse-ear cress).